The primary structure comprises 23 residues: Septenin 2d (23 aa).

As to expression, expressed in skin glands.

The protein localises to the secreted. May act as an antimicrobial peptide. This Osteopilus septentrionalis (Cuban treefrog) protein is Septenin 2d.